Here is a 347-residue protein sequence, read N- to C-terminus: Dual specificity mitogen-activated protein kinase kinase 3 (347 aa).

Position 1 is an N-acetylmethionine (Met1). The segment covering 1-11 (MESPAASPPAS) has biased composition (pro residues). The interval 1-45 (MESPAASPPASLPQTKGKSKRKKDLRISCVSKPPVSNPTPPRNLD) is disordered. Ser3 bears the Phosphoserine mark. The Protein kinase domain maps to 64–325 (LVTISELGRG…YLELMEHPFF (262 aa)). ATP contacts are provided by residues 70-78 (LGRGAYGVV) and Lys93. Asp190 functions as the Proton acceptor in the catalytic mechanism. Ser218 carries the phosphoserine modification. Phosphothreonine is present on Thr222.

The protein belongs to the protein kinase superfamily. STE Ser/Thr protein kinase family. MAP kinase kinase subfamily. Component of a signaling complex containing at least AKAP13, PKN1, MAPK14, ZAK and MAP2K3. Within this complex, AKAP13 interacts directly with PKN1, which in turn recruits MAPK14, MAP2K3 and ZAK. Binds to DYRK1B/MIRK and increases its kinase activity. Part of a complex with MAP3K3, RAC1 and CCM2. Interacts with ARRB1. Post-translationally, autophosphorylated. Phosphorylation on Ser-218 and Thr-222 by MAP kinase kinase kinases positively regulates the kinase activity. Phosphorylated by TAOK2.

It catalyses the reaction L-seryl-[protein] + ATP = O-phospho-L-seryl-[protein] + ADP + H(+). It carries out the reaction L-threonyl-[protein] + ATP = O-phospho-L-threonyl-[protein] + ADP + H(+). The enzyme catalyses L-tyrosyl-[protein] + ATP = O-phospho-L-tyrosyl-[protein] + ADP + H(+). With respect to regulation, activated by dual phosphorylation on Ser-218 and Thr-222. Dual specificity kinase. Is activated by cytokines and environmental stress in vivo. Catalyzes the concomitant phosphorylation of a threonine and a tyrosine residue in the MAP kinase p38. Part of a signaling cascade that begins with the activation of the adrenergic receptor ADRA1B and leads to the activation of MAPK14. This Mus musculus (Mouse) protein is Dual specificity mitogen-activated protein kinase kinase 3 (Map2k3).